Consider the following 395-residue polypeptide: Putative nickel insertion protein (395 aa).

The protein belongs to the LarC family.

The protein is Putative nickel insertion protein of Roseiflexus castenholzii (strain DSM 13941 / HLO8).